The following is a 118-amino-acid chain: Phosphoribosyl-AMP cyclohydrolase (118 aa).

Asp87 contacts Mg(2+). Position 88 (Cys88) interacts with Zn(2+). Asp89 and Asp91 together coordinate Mg(2+). Zn(2+) is bound by residues Cys104 and Cys111.

Belongs to the PRA-CH family. In terms of assembly, homodimer. Mg(2+) serves as cofactor. The cofactor is Zn(2+).

It is found in the cytoplasm. It catalyses the reaction 1-(5-phospho-beta-D-ribosyl)-5'-AMP + H2O = 1-(5-phospho-beta-D-ribosyl)-5-[(5-phospho-beta-D-ribosylamino)methylideneamino]imidazole-4-carboxamide. The protein operates within amino-acid biosynthesis; L-histidine biosynthesis; L-histidine from 5-phospho-alpha-D-ribose 1-diphosphate: step 3/9. Functionally, catalyzes the hydrolysis of the adenine ring of phosphoribosyl-AMP. The protein is Phosphoribosyl-AMP cyclohydrolase of Corynebacterium glutamicum (strain R).